Reading from the N-terminus, the 155-residue chain is 2-C-methyl-D-erythritol 2,4-cyclodiphosphate synthase (155 aa).

The a divalent metal cation site is built by aspartate 8 and histidine 10. 4-CDP-2-C-methyl-D-erythritol 2-phosphate-binding positions include 8–10 and 34–35; these read DVH and HS. An a divalent metal cation-binding site is contributed by histidine 42. 4-CDP-2-C-methyl-D-erythritol 2-phosphate is bound by residues 56–58, 61–65, 100–106, 132–135, phenylalanine 139, and lysine 142; these read DIG, FPDSD, AQKPKML, and TTEE.

This sequence belongs to the IspF family. Homotrimer. A divalent metal cation is required as a cofactor.

The enzyme catalyses 4-CDP-2-C-methyl-D-erythritol 2-phosphate = 2-C-methyl-D-erythritol 2,4-cyclic diphosphate + CMP. It functions in the pathway isoprenoid biosynthesis; isopentenyl diphosphate biosynthesis via DXP pathway; isopentenyl diphosphate from 1-deoxy-D-xylulose 5-phosphate: step 4/6. In terms of biological role, involved in the biosynthesis of isopentenyl diphosphate (IPP) and dimethylallyl diphosphate (DMAPP), two major building blocks of isoprenoid compounds. Catalyzes the conversion of 4-diphosphocytidyl-2-C-methyl-D-erythritol 2-phosphate (CDP-ME2P) to 2-C-methyl-D-erythritol 2,4-cyclodiphosphate (ME-CPP) with a corresponding release of cytidine 5-monophosphate (CMP). This chain is 2-C-methyl-D-erythritol 2,4-cyclodiphosphate synthase, found in Clostridium botulinum (strain ATCC 19397 / Type A).